The following is a 210-amino-acid chain: MEMDEDPDNLPAQGQGNIIITKYEQGHRAGAAVDLGHEQVDVRKYTNNLGIVHEMELPRVSALEVKQRRKESKRTNKWQKMLADWTKYRSTKKLSQRVCKVIPLAVRGRALSLLLDIDKIKSQNPGKYKVMKEKGKRSSRIIHCIQLDVSHTLQKHMMFIQRFGVKQQELCDILVAYSAYNPVSIPGQRYSWYLCPYSQAWVSLGGVATS.

Positions 101–210 (VIPLAVRGRA…WVSLGGVATS (110 aa)) constitute a Rab-GAP TBC domain.

In Homo sapiens (Human), this protein is TBC1 domain family member 28 (TBC1D28).